We begin with the raw amino-acid sequence, 384 residues long: S-adenosylmethionine synthase (384 aa).

His15 serves as a coordination point for ATP. Residue Asp17 coordinates Mg(2+). A K(+)-binding site is contributed by Glu43. L-methionine-binding residues include Glu56 and Gln99. Positions 99–109 (QSADINQGVDR) are flexible loop. ATP contacts are provided by residues 164-166 (DAK), 230-231 (RF), Asp239, 245-246 (RK), Ala262, and Lys266. Asp239 is a binding site for L-methionine. Residue Lys270 coordinates L-methionine.

The protein belongs to the AdoMet synthase family. Homotetramer; dimer of dimers. Requires Mg(2+) as cofactor. It depends on K(+) as a cofactor.

It is found in the cytoplasm. The catalysed reaction is L-methionine + ATP + H2O = S-adenosyl-L-methionine + phosphate + diphosphate. It functions in the pathway amino-acid biosynthesis; S-adenosyl-L-methionine biosynthesis; S-adenosyl-L-methionine from L-methionine: step 1/1. Catalyzes the formation of S-adenosylmethionine (AdoMet) from methionine and ATP. The overall synthetic reaction is composed of two sequential steps, AdoMet formation and the subsequent tripolyphosphate hydrolysis which occurs prior to release of AdoMet from the enzyme. In Haemophilus influenzae (strain ATCC 51907 / DSM 11121 / KW20 / Rd), this protein is S-adenosylmethionine synthase.